The chain runs to 65 residues: Large ribosomal subunit protein bL35 (65 aa).

Over residues 1–45 the composition is skewed to basic residues; it reads MPKMKSHSGAKKRFKKTGNGKIKRKKANKGHLLTKKNAKRKRQLR. Positions 1–65 are disordered; sequence MPKMKSHSGA…RDRIKRMLST (65 aa). Positions 48–57 are enriched in basic and acidic residues; that stretch reads VVVDDKANRD.

This sequence belongs to the bacterial ribosomal protein bL35 family.

This is Large ribosomal subunit protein bL35 from Salinibacter ruber (strain DSM 13855 / M31).